The sequence spans 261 residues: General secretion pathway protein N (261 aa).

Residues 1–10 (MRLEMIGLRT) lie on the Cytoplasmic side of the membrane. The chain crosses the membrane as a helical span at residues 11 to 31 (WLLATVVGWALLVCVLAVAGL). The Periplasmic segment spans residues 32–261 (GKRVELLPDD…QGGSTPGQTQ (230 aa)). The disordered stretch occupies residues 158–261 (VFNGQGGQPP…QGGSTPGQTQ (104 aa)). A compositionally biased stretch (pro residues) spans 179–200 (AVPPLPPNVPPAPATPAPPPAE). Over residues 201 to 211 (VPQQQPGGQAP) the composition is skewed to low complexity. Residues 227-244 (RPSDEQMRAIRERIEARR) show a composition bias toward basic and acidic residues.

In terms of assembly, binds to XpsD.

Its subcellular location is the cell inner membrane. Functionally, involved in a general secretion pathway (GSP) for the export of proteins. The sequence is that of General secretion pathway protein N (xpsN) from Xanthomonas campestris pv. campestris (strain ATCC 33913 / DSM 3586 / NCPPB 528 / LMG 568 / P 25).